A 511-amino-acid chain; its full sequence is 2-isopropylmalate synthase (511 aa).

Positions 1–16 (MTRKIDIFDTTLRDGE) are enriched in basic and acidic residues. Residues 1 to 23 (MTRKIDIFDTTLRDGEQSPGASM) are disordered. The region spanning 5-268 (IDIFDTTLRD…HTDVVTQELT (264 aa)) is the Pyruvate carboxyltransferase domain. Mn(2+) contacts are provided by aspartate 14, histidine 203, histidine 205, and asparagine 239. The interval 392 to 511 (ALESVQVVCG…IQTTRSKQGK (120 aa)) is regulatory domain.

The protein belongs to the alpha-IPM synthase/homocitrate synthase family. LeuA type 1 subfamily. Homodimer. It depends on Mn(2+) as a cofactor.

It localises to the cytoplasm. It catalyses the reaction 3-methyl-2-oxobutanoate + acetyl-CoA + H2O = (2S)-2-isopropylmalate + CoA + H(+). Its pathway is amino-acid biosynthesis; L-leucine biosynthesis; L-leucine from 3-methyl-2-oxobutanoate: step 1/4. In terms of biological role, catalyzes the condensation of the acetyl group of acetyl-CoA with 3-methyl-2-oxobutanoate (2-ketoisovalerate) to form 3-carboxy-3-hydroxy-4-methylpentanoate (2-isopropylmalate). The sequence is that of 2-isopropylmalate synthase from Olsenella uli (strain ATCC 49627 / DSM 7084 / CCUG 31166 / CIP 109912 / JCM 12494 / LMG 11480 / NCIMB 702895 / VPI D76D-27C) (Lactobacillus uli).